A 204-amino-acid polypeptide reads, in one-letter code: Guanylate kinase (204 aa).

Residues 5 to 184 enclose the Guanylate kinase-like domain; that stretch reads GLLLVLSGPS…AVDHIKAIVD (180 aa). 12–19 contacts ATP; the sequence is GPSGVGKG.

It belongs to the guanylate kinase family.

Its subcellular location is the cytoplasm. The enzyme catalyses GMP + ATP = GDP + ADP. Essential for recycling GMP and indirectly, cGMP. The protein is Guanylate kinase of Lactobacillus acidophilus (strain ATCC 700396 / NCK56 / N2 / NCFM).